Reading from the N-terminus, the 185-residue chain is Ribosome-recycling factor (185 aa).

The protein belongs to the RRF family.

The protein resides in the cytoplasm. In terms of biological role, responsible for the release of ribosomes from messenger RNA at the termination of protein biosynthesis. May increase the efficiency of translation by recycling ribosomes from one round of translation to another. This chain is Ribosome-recycling factor, found in Halorhodospira halophila (strain DSM 244 / SL1) (Ectothiorhodospira halophila (strain DSM 244 / SL1)).